Consider the following 109-residue polypeptide: Biphenyl dioxygenase system ferredoxin subunit (109 aa).

The Rieske domain occupies 4–100; the sequence is TRVCDRRDVP…IRIEDNDVLV (97 aa). Residues Cys43, His45, Cys63, and His66 each contribute to the [2Fe-2S] cluster site.

This sequence belongs to the bacterial ring-hydroxylating dioxygenase ferredoxin component family. As to quaternary structure, this dioxygenase system consists of four proteins: the two subunits of the hydroxylase component (BphA and BphE), a ferredoxin (BphF) and a ferredoxin reductase (BphG).

In terms of biological role, this protein seems to be a 2Fe-2S ferredoxin. The polypeptide is Biphenyl dioxygenase system ferredoxin subunit (bphF) (Paraburkholderia xenovorans (strain LB400)).